Consider the following 524-residue polypeptide: Maturase K (524 aa).

The protein belongs to the intron maturase 2 family. MatK subfamily.

It localises to the plastid. It is found in the chloroplast. Usually encoded in the trnK tRNA gene intron. Probably assists in splicing its own and other chloroplast group II introns. The polypeptide is Maturase K (Welwitschia mirabilis (Tree tumbo)).